A 179-amino-acid chain; its full sequence is tRNA (cytidine(56)-2'-O)-methyltransferase (179 aa).

S-adenosyl-L-methionine-binding positions include L82, 110–114, and 128–135; these read GAEKV and VGNQPHSE.

It belongs to the aTrm56 family. Homodimer.

It localises to the cytoplasm. It catalyses the reaction cytidine(56) in tRNA + S-adenosyl-L-methionine = 2'-O-methylcytidine(56) in tRNA + S-adenosyl-L-homocysteine + H(+). Its function is as follows. Specifically catalyzes the AdoMet-dependent 2'-O-ribose methylation of cytidine at position 56 in tRNAs. The protein is tRNA (cytidine(56)-2'-O)-methyltransferase of Methanocaldococcus jannaschii (strain ATCC 43067 / DSM 2661 / JAL-1 / JCM 10045 / NBRC 100440) (Methanococcus jannaschii).